Reading from the N-terminus, the 752-residue chain is DNA topoisomerase 4 subunit A (752 aa).

In terms of domain architecture, Topo IIA-type catalytic spans 31-494; the sequence is LPFIGDGLKP…EAKAMSEHDM (464 aa). Tyrosine 120 functions as the O-(5'-phospho-DNA)-tyrosine intermediate in the catalytic mechanism. Disordered stretches follow at residues 472–492 and 718–752; these read YGDDRRSPLQEREEAKAMSEH and TGERGRRGTLMRGLQRIDRVEIDSPRRASSGDSEE. 2 stretches are compositionally biased toward basic and acidic residues: residues 473-492 and 732-743; these read GDDRRSPLQEREEAKAMSEH and QRIDRVEIDSPR.

It belongs to the type II topoisomerase GyrA/ParC subunit family. ParC type 1 subfamily. In terms of assembly, heterotetramer composed of ParC and ParE.

The protein resides in the cell membrane. It catalyses the reaction ATP-dependent breakage, passage and rejoining of double-stranded DNA.. Functionally, topoisomerase IV is essential for chromosome segregation. It relaxes supercoiled DNA. Performs the decatenation events required during the replication of a circular DNA molecule. This is DNA topoisomerase 4 subunit A from Escherichia coli O157:H7.